We begin with the raw amino-acid sequence, 110 residues long: Parvalbumin alpha (110 aa).

EF-hand domains are found at residues 39 to 74 (KGPD…FTPN) and 78 to 110 (LSVK…VSES). Asp52, Asp54, Ser56, Phe58, Glu60, Glu63, Asp91, Asp93, Asp95, Lys97, and Glu102 together coordinate Ca(2+).

It belongs to the parvalbumin family.

In muscle, parvalbumin is thought to be involved in relaxation after contraction. It binds two calcium ions. The polypeptide is Parvalbumin alpha (Aquarana catesbeiana (American bullfrog)).